Consider the following 180-residue polypeptide: Adenine phosphoribosyltransferase (180 aa).

Ser-2 bears the N-acetylserine mark. Ser-15 and Ser-30 each carry phosphoserine. At Tyr-60 the chain carries Phosphotyrosine. Ser-66 bears the Phosphoserine mark. Lys-114 is subject to N6-acetyllysine. Thr-135 bears the Phosphothreonine mark.

Belongs to the purine/pyrimidine phosphoribosyltransferase family. Homodimer.

It is found in the cytoplasm. The enzyme catalyses AMP + diphosphate = 5-phospho-alpha-D-ribose 1-diphosphate + adenine. It participates in purine metabolism; AMP biosynthesis via salvage pathway; AMP from adenine: step 1/1. Functionally, catalyzes a salvage reaction resulting in the formation of AMP, that is energically less costly than de novo synthesis. This chain is Adenine phosphoribosyltransferase, found in Mus musculus (Mouse).